A 262-amino-acid chain; its full sequence is Aminoglycoside (3'') (9) adenylyltransferase (262 aa).

Residues 1 to 157 (MTLSIPPSIQ…ERAERLFTPA (157 aa)) form an adenylyltransferase domain region. ATP-binding residues include Ser-36, Ser-46, and Asp-47. Mg(2+) is bound by residues Asp-47, Asp-49, and Glu-87. The active-site Proton acceptor is Glu-87. Asp-130 is an ATP binding site. Residues 158 to 262 (PAAQLLKALR…AKAHIPTQFT (105 aa)) form a helical domain region. Residues 173–178 (WQSTAD) and His-185 each bind streptomycin. Residues Lys-205 and Tyr-231 each coordinate ATP.

Monomer.

It carries out the reaction streptomycin + ATP = 3''-O-adenylylstreptomycin + diphosphate. The enzyme catalyses spectinomycin + ATP = 9-O-adenylylspectinomycin + diphosphate. Mediates bacterial resistance to the antibiotics streptomycin and spectinomycin, does not confer resistance to kanamycin. Binds ATP first, then antibiotic. The protein is Aminoglycoside (3'') (9) adenylyltransferase (aadA) of Salmonella typhimurium (strain LT2 / SGSC1412 / ATCC 700720).